The primary structure comprises 618 residues: DNA mismatch repair protein MutL (618 aa).

Residues 366–378 show a composition bias toward low complexity; that stretch reads AEPTAAREPATPR. The interval 366 to 403 is disordered; that stretch reads AEPTAAREPATPRYSDGASGGNGGRQSAGGWPHAQPGY. Positions 383 to 392 are enriched in gly residues; it reads ASGGNGGRQS.

The protein belongs to the DNA mismatch repair MutL/HexB family.

Functionally, this protein is involved in the repair of mismatches in DNA. It is required for dam-dependent methyl-directed DNA mismatch repair. May act as a 'molecular matchmaker', a protein that promotes the formation of a stable complex between two or more DNA-binding proteins in an ATP-dependent manner without itself being part of a final effector complex. In Salmonella typhi, this protein is DNA mismatch repair protein MutL.